The sequence spans 141 residues: Prefoldin subunit alpha (141 aa).

This sequence belongs to the prefoldin subunit alpha family. Heterohexamer of two alpha and four beta subunits.

Its subcellular location is the cytoplasm. Functionally, molecular chaperone capable of stabilizing a range of proteins. Seems to fulfill an ATP-independent, HSP70-like function in archaeal de novo protein folding. The sequence is that of Prefoldin subunit alpha (pfdA) from Methanothermobacter thermautotrophicus (strain ATCC 29096 / DSM 1053 / JCM 10044 / NBRC 100330 / Delta H) (Methanobacterium thermoautotrophicum).